The chain runs to 209 residues: Type III pantothenate kinase (209 aa).

5-12 provides a ligand contact to ATP; that stretch reads DIGNSNAN. Substrate is bound by residues tyrosine 68 and 72–75; that span reads GIDR. Aspartate 74 functions as the Proton acceptor in the catalytic mechanism. Aspartate 89 is a binding site for K(+). Serine 92 lines the ATP pocket. Threonine 144 is a binding site for substrate.

It belongs to the type III pantothenate kinase family. In terms of assembly, homodimer. NH4(+) serves as cofactor. The cofactor is K(+).

The protein resides in the cytoplasm. It catalyses the reaction (R)-pantothenate + ATP = (R)-4'-phosphopantothenate + ADP + H(+). The protein operates within cofactor biosynthesis; coenzyme A biosynthesis; CoA from (R)-pantothenate: step 1/5. In terms of biological role, catalyzes the phosphorylation of pantothenate (Pan), the first step in CoA biosynthesis. The chain is Type III pantothenate kinase from Campylobacter jejuni subsp. jejuni serotype O:2 (strain ATCC 700819 / NCTC 11168).